We begin with the raw amino-acid sequence, 125 residues long: Small ribosomal subunit protein uS12m (125 aa).

Positions 1 to 24 (MPTSNQSIRHGREKKRRTDRTRAL) are disordered. The segment covering 9–19 (RHGREKKRRTD) has biased composition (basic residues).

This sequence belongs to the universal ribosomal protein uS12 family.

The protein resides in the mitochondrion. Functionally, protein S12 is involved in the translation initiation step. This is Small ribosomal subunit protein uS12m (RPS12) from Pinus sylvestris (Scotch pine).